The primary structure comprises 317 residues: Integrin-binding sialoprotein (317 aa).

The first 16 residues, 1–16 (MKTALILLSILGMACA), serve as a signal peptide directing secretion. 6 positions are modified to phosphoserine: Ser-31, Ser-67, Ser-74, Ser-75, Ser-94, and Ser-100. The segment at 58–254 (FPVQGSSDSS…RTTSPPFGKT (197 aa)) is disordered. Over residues 66–102 (SSEENGDDSSEEEEEEEETSNEGENNEESNEDEDSEA) the composition is skewed to acidic residues. Asn-104 is a glycosylation site (N-linked (GlcNAc...) asparagine). Thr-119 and Thr-122 each carry an O-linked (GalNAc...) threonine glycan. A Phosphoserine modification is found at Ser-149. The span at 149–173 (SDEEEEEEEEGNENEESEAEVDENE) shows a compositional bias: acidic residues. N-linked (GlcNAc...) asparagine glycosylation is found at Asn-177, Asn-182, and Asn-190. The span at 222–232 (KGTSKTTTSPN) shows a compositional bias: polar residues. O-linked (GalNAc...) threonine glycosylation is found at Thr-227, Thr-228, Thr-229, Thr-238, and Thr-239. Ser-280 carries the phosphoserine modification. The Integrin-binding motif signature appears at 286-288 (RGD). 2 positions are modified to sulfotyrosine: Tyr-313 and Tyr-314.

Monomer. Interacts with integrins; the interaction promotes cell adhesion. Post-translationally, N-glycosylated; glycans consist of sialylated and core-fucosylated bi-, tri- and tetraantennary chains. O-glycosylated at eight sites; mucin-type glycans contain Gal, GlcNAc, GalNAc and terminal NeuAc. In terms of tissue distribution, expressed in bone (at protein level). Expressed in trophoblast cells of placenta (at protein level). Expressed in brain.

Its subcellular location is the secreted. Its function is as follows. Binds tightly to hydroxyapatite. Appears to form an integral part of the mineralized matrix. Probably important to cell-matrix interaction. Promotes adhesion and migration of various cells via the alpha-V/beta-3 integrin receptor (ITGAV:ITGB3). This chain is Integrin-binding sialoprotein (IBSP), found in Homo sapiens (Human).